Consider the following 140-residue polypeptide: Sex-regulated protein janus-B (140 aa).

Arg42 contributes to the substrate binding site. Residue His69 is the Proton acceptor of the active site. 110–112 (SRT) serves as a coordination point for substrate.

It belongs to the janus family.

Functionally, janA and janB regulate somatic sex differentiation. The sequence is that of Sex-regulated protein janus-B (janB) from Drosophila simulans (Fruit fly).